Consider the following 662-residue polypeptide: Glycogen debranching enzyme (662 aa).

D338 (nucleophile) is an active-site residue. The Proton donor role is filled by E373.

It belongs to the glycosyl hydrolase 13 family.

The enzyme catalyses Hydrolysis of (1-&gt;6)-alpha-D-glucosidic linkages to branches with degrees of polymerization of three or four glucose residues in limit dextrin.. The protein operates within glycan degradation; glycogen degradation. Removes maltotriose and maltotetraose chains that are attached by 1,6-alpha-linkage to the limit dextrin main chain, generating a debranched limit dextrin. This Yersinia pseudotuberculosis serotype IB (strain PB1/+) protein is Glycogen debranching enzyme.